The chain runs to 139 residues: Small ribosomal subunit protein bS6 (139 aa).

The interval 119–139 (LKGASKVETPTGPESTDIQEK) is disordered. The span at 130 to 139 (GPESTDIQEK) shows a compositional bias: polar residues.

It belongs to the bacterial ribosomal protein bS6 family.

Functionally, binds together with bS18 to 16S ribosomal RNA. The polypeptide is Small ribosomal subunit protein bS6 (Borreliella burgdorferi (strain ZS7) (Borrelia burgdorferi)).